A 570-amino-acid chain; its full sequence is Frizzled-2 (570 aa).

An N-terminal signal peptide occupies residues 1-28; sequence MRARSALPRSALPRLLLPLLLLPAAGPA. The Extracellular segment spans residues 29–252; the sequence is QFHGEKGISI…QEETRFARLW (224 aa). One can recognise an FZ domain in the interval 39–158; sequence PDHGFCQPIS…HGAEQICVGQ (120 aa). Disulfide bonds link Cys-44–Cys-105, Cys-52–Cys-98, Cys-89–Cys-126, Cys-115–Cys-155, and Cys-119–Cys-143. Asn-58 is a glycosylation site (N-linked (GlcNAc...) asparagine). The N-linked (GlcNAc...) asparagine glycan is linked to Asn-159. The disordered stretch occupies residues 166 to 194; it reads PALLTTAPPSGLQPGAGGTPGGPGGGGSP. Residues 179 to 193 show a composition bias toward gly residues; that stretch reads PGAGGTPGGPGGGGS. The chain crosses the membrane as a helical span at residues 253-273; it reads ILTWSVLCCASTFFTVTTYLV. The Cytoplasmic portion of the chain corresponds to 274–284; it reads DMQRFRYPERP. The chain crosses the membrane as a helical span at residues 285-305; sequence IIFLSGCYTMVSVAYIAGFVL. The Extracellular portion of the chain corresponds to 306–332; sequence QERVVCNERFSEDGYRTVVQGTKKEGC. The chain crosses the membrane as a helical span at residues 333-353; that stretch reads TILFMMLYFFSMASSIWWVIL. Residues 354-375 are Cytoplasmic-facing; it reads SLTWFLAAGMKWGHEAIEANSQ. The chain crosses the membrane as a helical span at residues 376–396; that stretch reads YFHLAAWAVPAVKTITILAMG. Over 397–419 the chain is Extracellular; sequence QIDGDLLSGVCFVGLNSLDPLRG. The chain crosses the membrane as a helical span at residues 420–440; that stretch reads FVLAPLFVYLFIGTSFLLAGF. Residues 441 to 466 lie on the Cytoplasmic side of the membrane; the sequence is VSLFRIRTIMKHDGTKTEKLERLMVR. Residues 467–487 form a helical membrane-spanning segment; that stretch reads IGVFSVLYTVPATIVIACYFY. Topologically, residues 488–524 are extracellular; it reads EQAFREHWERSWVSQHCKSLAIPCPAHYTPRMSPDFT. Residues 525–545 traverse the membrane as a helical segment; the sequence is VYMIKYLMTLIVGITSGFWIW. At 546–570 the chain is on the cytoplasmic side; the sequence is SGKTLHSWRKFYTRLTNSRHGETTV. Positions 548–553 match the Lys-Thr-X-X-X-Trp motif, mediates interaction with the PDZ domain of Dvl family members motif; sequence KTLHSW. The short motif at 568–570 is the PDZ-binding element; that stretch reads TTV.

This sequence belongs to the G-protein coupled receptor Fz/Smo family. In terms of processing, ubiquitinated by ZNRF3, leading to its degradation by the proteasome. In terms of tissue distribution, expressed in embryonic and adult heart, lung, chondrocytes and brain. Also expressed in the developing gastrointestinal tract (strongest in foregut), much weaker expression in the adult. No expression in fetal liver and adult spleen. Up-regulated in esophageal squamous cell carcinomas.

Its subcellular location is the membrane. It localises to the cell membrane. In terms of biological role, receptor for Wnt proteins. Most of frizzled receptors are coupled to the beta-catenin canonical signaling pathway, which leads to the activation of disheveled proteins, inhibition of GSK-3 kinase, nuclear accumulation of beta-catenin and activation of Wnt target genes. A second signaling pathway involving PKC and calcium fluxes has been seen for some family members, but it is not yet clear if it represents a distinct pathway or if it can be integrated in the canonical pathway, as PKC seems to be required for Wnt-mediated inactivation of GSK-3 kinase. Both pathways seem to involve interactions with G-proteins. May be involved in transduction and intercellular transmission of polarity information during tissue morphogenesis and/or in differentiated tissues. In Mus musculus (Mouse), this protein is Frizzled-2 (Fzd2).